Reading from the N-terminus, the 286-residue chain is 4-hydroxybenzoate octaprenyltransferase (286 aa).

7 consecutive transmembrane segments (helical) span residues 22–42, 45–65, 98–118, 143–163, 213–233, 238–255, and 266–286; these read IGTL…EKAM, LSVL…GCVI, LFIV…LYTI, FFLG…TIEA, IIAL…YLSQ, YFIV…QCRL, and NAFL…LFGI.

Belongs to the UbiA prenyltransferase family. It depends on Mg(2+) as a cofactor.

It is found in the cell inner membrane. It catalyses the reaction all-trans-octaprenyl diphosphate + 4-hydroxybenzoate = 4-hydroxy-3-(all-trans-octaprenyl)benzoate + diphosphate. It functions in the pathway cofactor biosynthesis; ubiquinone biosynthesis. Its function is as follows. Catalyzes the prenylation of para-hydroxybenzoate (PHB) with an all-trans polyprenyl group. Mediates the second step in the final reaction sequence of ubiquinone-8 (UQ-8) biosynthesis, which is the condensation of the polyisoprenoid side chain with PHB, generating the first membrane-bound Q intermediate 3-octaprenyl-4-hydroxybenzoate. In Histophilus somni (strain 129Pt) (Haemophilus somnus), this protein is 4-hydroxybenzoate octaprenyltransferase.